The chain runs to 370 residues: Protein DVU_0535 (370 aa).

Topologically, residues methionine 1–glutamate 258 are cytoplasmic. 4Fe-4S ferredoxin-type domains lie at tyrosine 40–alanine 70, aspartate 101–aspartate 132, and glycine 133–alanine 162. [4Fe-4S] cluster contacts are provided by cysteine 49, cysteine 52, cysteine 55, cysteine 59, cysteine 110, cysteine 113, cysteine 118, cysteine 122, cysteine 142, cysteine 145, cysteine 148, cysteine 152, cysteine 172, cysteine 175, cysteine 187, and cysteine 191. The chain crosses the membrane as a helical span at residues tyrosine 259–isoleucine 284. Residues threonine 285–alanine 370 are Periplasmic-facing. Basic and acidic residues predominate over residues phenylalanine 345 to proline 355. The tract at residues phenylalanine 345–alanine 370 is disordered.

The protein localises to the cell membrane. Its function is as follows. HMWC (high-molecular-weight cytochrome c precursor), ORF2, ORF3, ORF4, ORF5, ORF6 in the HMC operon form a transmembrane protein complex that allows electron flow from the periplasmic hydrogenase to the cytoplasmic enzymes that catalyze reduction of sulfates. ORF2 is a transmembrane redox protein. This is Protein DVU_0535 from Nitratidesulfovibrio vulgaris (strain ATCC 29579 / DSM 644 / CCUG 34227 / NCIMB 8303 / VKM B-1760 / Hildenborough) (Desulfovibrio vulgaris).